The sequence spans 215 residues: Probable transaldolase 1 (215 aa).

The Schiff-base intermediate with substrate role is filled by K83.

The protein belongs to the transaldolase family. Type 3B subfamily.

Its subcellular location is the cytoplasm. The catalysed reaction is D-sedoheptulose 7-phosphate + D-glyceraldehyde 3-phosphate = D-erythrose 4-phosphate + beta-D-fructose 6-phosphate. Its pathway is carbohydrate degradation; pentose phosphate pathway; D-glyceraldehyde 3-phosphate and beta-D-fructose 6-phosphate from D-ribose 5-phosphate and D-xylulose 5-phosphate (non-oxidative stage): step 2/3. Its function is as follows. Transaldolase is important for the balance of metabolites in the pentose-phosphate pathway. The polypeptide is Probable transaldolase 1 (Bacillus anthracis).